A 453-amino-acid polypeptide reads, in one-letter code: 3-phosphoshikimate 1-carboxyvinyltransferase (453 aa).

The segment covering Met-1 to Gly-12 has biased composition (polar residues). The tract at residues Met-1 to Ser-21 is disordered. 3-phosphoshikimate-binding residues include Lys-20, Ser-21, and Arg-25. Lys-20 is a binding site for phosphoenolpyruvate. Phosphoenolpyruvate-binding residues include Gly-97 and Arg-125. The 3-phosphoshikimate site is built by Ser-170, Ser-171, Gln-172, Ser-198, Asp-330, and Lys-357. Gln-172 provides a ligand contact to phosphoenolpyruvate. Asp-330 serves as the catalytic Proton acceptor. Residues Arg-361 and Arg-404 each coordinate phosphoenolpyruvate.

Belongs to the EPSP synthase family. As to quaternary structure, monomer.

It localises to the cytoplasm. The enzyme catalyses 3-phosphoshikimate + phosphoenolpyruvate = 5-O-(1-carboxyvinyl)-3-phosphoshikimate + phosphate. It functions in the pathway metabolic intermediate biosynthesis; chorismate biosynthesis. Its function is as follows. Catalyzes the transfer of the enolpyruvyl moiety of phosphoenolpyruvate (PEP) to the 5-hydroxyl of shikimate-3-phosphate (S3P) to produce enolpyruvyl shikimate-3-phosphate and inorganic phosphate. The protein is 3-phosphoshikimate 1-carboxyvinyltransferase of Halorubrum lacusprofundi (strain ATCC 49239 / DSM 5036 / JCM 8891 / ACAM 34).